The sequence spans 339 residues: Sulfate/thiosulfate import ATP-binding protein CysA (339 aa).

The ABC transporter domain occupies 3-237 (IAIRSVEKQF…PETAFVCGFV (235 aa)). An ATP-binding site is contributed by 35–42 (GPSGSGKT).

Belongs to the ABC transporter superfamily. Sulfate/tungstate importer (TC 3.A.1.6) family. As to quaternary structure, the complex is composed of two ATP-binding proteins (CysA), two transmembrane proteins (CysT and CysW) and a solute-binding protein (CysP).

It localises to the cell inner membrane. The enzyme catalyses sulfate(out) + ATP + H2O = sulfate(in) + ADP + phosphate + H(+). It catalyses the reaction thiosulfate(out) + ATP + H2O = thiosulfate(in) + ADP + phosphate + H(+). Part of the ABC transporter complex CysAWTP involved in sulfate/thiosulfate import. Responsible for energy coupling to the transport system. In Caulobacter vibrioides (strain ATCC 19089 / CIP 103742 / CB 15) (Caulobacter crescentus), this protein is Sulfate/thiosulfate import ATP-binding protein CysA.